The following is an 87-amino-acid chain: Toxin CsEv2 (87 aa).

Residues 1 to 19 (MNSLLIITACLFLIGTVWA) form the signal peptide. The LCN-type CS-alpha/beta domain occupies 20–85 (KEGYLVNKST…TYPLPNKSCS (66 aa)). Intrachain disulfides connect Cys31-Cys84, Cys35-Cys60, Cys44-Cys65, and Cys48-Cys67.

This sequence belongs to the long (4 C-C) scorpion toxin superfamily. Sodium channel inhibitor family. Beta subfamily. Expressed by the venom gland.

It is found in the secreted. Its function is as follows. Beta toxins bind voltage-independently at site-4 of sodium channels (Nav) and shift the voltage of activation toward more negative potentials thereby affecting sodium channel activation and promoting spontaneous and repetitive firing. Induces immediate paralysis in crickets after injection, with a total paralysis occurring within 15-30 minutes and lasting for 1-2 hours. Is also lethal to vertebrate (chicks) when injected in very high dosages (more that 100 mg/kg). The sequence is that of Toxin CsEv2 from Centruroides sculpturatus (Arizona bark scorpion).